We begin with the raw amino-acid sequence, 299 residues long: Aspartate carbamoyltransferase catalytic subunit (299 aa).

Carbamoyl phosphate is bound by residues arginine 51 and threonine 52. Lysine 79 provides a ligand contact to L-aspartate. 3 residues coordinate carbamoyl phosphate: arginine 101, histidine 130, and glutamine 133. Residues arginine 163 and arginine 215 each contribute to the L-aspartate site. Carbamoyl phosphate-binding residues include glycine 256 and proline 257.

Belongs to the aspartate/ornithine carbamoyltransferase superfamily. ATCase family. As to quaternary structure, heterododecamer (2C3:3R2) of six catalytic PyrB chains organized as two trimers (C3), and six regulatory PyrI chains organized as three dimers (R2).

It catalyses the reaction carbamoyl phosphate + L-aspartate = N-carbamoyl-L-aspartate + phosphate + H(+). Its pathway is pyrimidine metabolism; UMP biosynthesis via de novo pathway; (S)-dihydroorotate from bicarbonate: step 2/3. Functionally, catalyzes the condensation of carbamoyl phosphate and aspartate to form carbamoyl aspartate and inorganic phosphate, the committed step in the de novo pyrimidine nucleotide biosynthesis pathway. This chain is Aspartate carbamoyltransferase catalytic subunit, found in Ehrlichia chaffeensis (strain ATCC CRL-10679 / Arkansas).